Consider the following 307-residue polypeptide: Aspartate carbamoyltransferase catalytic subunit (307 aa).

Positions 56 and 57 each coordinate carbamoyl phosphate. Residue Lys84 coordinates L-aspartate. The carbamoyl phosphate site is built by Arg106, His136, and Gln139. Residues Arg169 and Arg221 each contribute to the L-aspartate site. Residues Ala262 and Pro263 each coordinate carbamoyl phosphate.

It belongs to the aspartate/ornithine carbamoyltransferase superfamily. ATCase family. As to quaternary structure, heterododecamer (2C3:3R2) of six catalytic PyrB chains organized as two trimers (C3), and six regulatory PyrI chains organized as three dimers (R2).

The catalysed reaction is carbamoyl phosphate + L-aspartate = N-carbamoyl-L-aspartate + phosphate + H(+). The protein operates within pyrimidine metabolism; UMP biosynthesis via de novo pathway; (S)-dihydroorotate from bicarbonate: step 2/3. Its function is as follows. Catalyzes the condensation of carbamoyl phosphate and aspartate to form carbamoyl aspartate and inorganic phosphate, the committed step in the de novo pyrimidine nucleotide biosynthesis pathway. The sequence is that of Aspartate carbamoyltransferase catalytic subunit from Streptococcus pneumoniae (strain P1031).